Here is a 728-residue protein sequence, read N- to C-terminus: Catalase B (728 aa).

Residues H107 and N180 contribute to the active site. Y394 contacts heme.

Belongs to the catalase family. Heme is required as a cofactor.

It is found in the secreted. The enzyme catalyses 2 H2O2 = O2 + 2 H2O. In terms of biological role, occurs in almost all aerobically respiring organisms and serves to protect cells from the toxic effects of hydrogen peroxide. The sequence is that of Catalase B (CATB) from Ajellomyces capsulatus (Darling's disease fungus).